We begin with the raw amino-acid sequence, 409 residues long: MALVNEHFLKLPNNYLFSDIAKKVNAFKVSHPKTDLIRLGIGDVTRPLPQTSIEAMYKAVDELANKETFHGYGPEQGYDFLIDAVIRNDYAPRGVYLEPGEVFISDGAKSDTGNIGDILRHDNSIGVTDPIYPVYIDSNVMCGRAGILEDGRWSNVVYLPCLSENNFVPEIPDRRIDILYLCYPNNPTGTVISKAELKKWVNYALENDTLILYDAAYEAYIQDPDIPHSIYEIKGAKKVAIEFRSFSKTAGFTGVRCGYTVVPKELTAATLEGERIPLNRMWNRRQCTKFNGTSYITQRGAEAIYTPEGKKQVKAIIQYYMANARIMKEALESTGLKVFGGENAPYLWVKAPGEVSSWKFFEQMLYEANVVGTPGVGFGPSGEGYIRLTAFGERADCEEAMKRIRKWLL.

Tyrosine 15 and glycine 42 together coordinate substrate. Residues tyrosine 72, 108 to 109 (AK), tyrosine 132, asparagine 186, tyrosine 217, and 245 to 247 (SFS) each bind pyridoxal 5'-phosphate. Substrate-binding residues include lysine 109, tyrosine 132, and asparagine 186. An N6-(pyridoxal phosphate)lysine modification is found at lysine 248. The pyridoxal 5'-phosphate site is built by arginine 256 and asparagine 291. Asparagine 291 and arginine 387 together coordinate substrate.

This sequence belongs to the class-I pyridoxal-phosphate-dependent aminotransferase family. LL-diaminopimelate aminotransferase subfamily. Homodimer. It depends on pyridoxal 5'-phosphate as a cofactor.

The catalysed reaction is (2S,6S)-2,6-diaminopimelate + 2-oxoglutarate = (S)-2,3,4,5-tetrahydrodipicolinate + L-glutamate + H2O + H(+). Its pathway is amino-acid biosynthesis; L-lysine biosynthesis via DAP pathway; LL-2,6-diaminopimelate from (S)-tetrahydrodipicolinate (aminotransferase route): step 1/1. Involved in the synthesis of meso-diaminopimelate (m-DAP or DL-DAP), required for both lysine and peptidoglycan biosynthesis. Catalyzes the direct conversion of tetrahydrodipicolinate to LL-diaminopimelate. In Phocaeicola vulgatus (strain ATCC 8482 / DSM 1447 / JCM 5826 / CCUG 4940 / NBRC 14291 / NCTC 11154) (Bacteroides vulgatus), this protein is LL-diaminopimelate aminotransferase.